Reading from the N-terminus, the 417-residue chain is Leucine-rich repeat-containing protein 42 (417 aa).

LRR repeat units follow at residues 167-188 (CLHS…LAHL), 195-215 (SLTE…QKMT), 227-248 (KLKV…CFLF), and 252-273 (LLKF…LKKI). Residues 360–390 (FFRPKEQKDPDSSNSEKRRHSTKRTGADCVQ) are disordered. A compositionally biased stretch (basic and acidic residues) spans 362–375 (RPKEQKDPDSSNSE).

It belongs to the LRRC42 family.

This is Leucine-rich repeat-containing protein 42 (lrrc42) from Xenopus laevis (African clawed frog).